We begin with the raw amino-acid sequence, 858 residues long: Ubiquitin carboxyl-terminal hydrolase 5 (858 aa).

Ala-2 bears the N-acetylalanine mark. The tract at residues 73-98 is disordered; that stretch reads LRRTRRPKEEDTSAGTGDPPRKKPTR. Lys-113 is covalently cross-linked (Glycyl lysine isopeptide (Lys-Gly) (interchain with G-Cter in SUMO)). A phosphoserine mark is found at Ser-149 and Ser-156. The UBP-type; degenerate zinc-finger motif lies at 175 to 283; it reads QVSKHAFNLK…EHLSHFGIDM (109 aa). Cys-195 and Cys-816 are joined by a disulfide. Zn(2+) contacts are provided by Cys-199 and Cys-202. Substrate is bound at residue Trp-209. Cys-219 contributes to the Zn(2+) binding site. 221-224 serves as a coordination point for substrate; sequence RRYF. His-232 is a binding site for Zn(2+). Substrate contacts are provided by Tyr-259, Tyr-261, and Asp-264. The residue at position 292 (Thr-292) is a Phosphothreonine. Positions 326–856 constitute a USP domain; the sequence is TGIRNLGNSC…LGYIYFYQRV (531 aa). Cys-335 acts as the Nucleophile in catalysis. A Phosphothreonine modification is found at Thr-623. UBA domains are found at residues 654-695 and 722-762; these read MLDE…VMSH and PPPE…IFSH. A phosphoserine mark is found at Ser-779, Ser-783, and Ser-785. The active-site Proton acceptor is the His-818.

The protein belongs to the peptidase C19 family. Homodimer. Interacts with TRIML1. In terms of processing, SUMOylated at Lys-113; SUMOylation affects the interaction with Cav3.2 channels. Ubiquitinated by SMURF1; leading to proteasomal degradation.

It is found in the cytoplasm. The protein resides in the stress granule. The protein localises to the nucleus. It catalyses the reaction Thiol-dependent hydrolysis of ester, thioester, amide, peptide and isopeptide bonds formed by the C-terminal Gly of ubiquitin (a 76-residue protein attached to proteins as an intracellular targeting signal).. Deubiquitinating enzyme that participates in a wide range of cellular processes by specifically cleaving isopeptide bonds between ubiquitin and substrate proteins or ubiquitin itself. Affects thereby important cellular signaling pathways such as NF-kappa-B, Wnt/beta-catenin, and cytokine production by regulating ubiquitin-dependent protein degradation. Participates in the activation of the Wnt signaling pathway by promoting FOXM1 deubiquitination and stabilization that induces the recruitment of beta-catenin to Wnt target gene promoter. Regulates the assembly and disassembly of heat-induced stress granules by mediating the hydrolysis of unanchored ubiquitin chains. Promotes lipopolysaccharide-induced apoptosis and inflammatory response by stabilizing the TXNIP protein. Affects T-cell biology by stabilizing the inhibitory receptor on T-cells PDC1. Acts as a negative regulator of autophagy by regulating ULK1 at both protein and mRNA levels. Acts also as a negative regulator of type I interferon production by simultaneously removing both 'Lys-48'-linked unanchored and 'Lys-63'-linked anchored polyubiquitin chains on the transcription factor IRF3. Modulates the stability of DNA mismatch repair protein MLH1 and counteracts the effect of the ubiquitin ligase UBR4. Upon activation by insulin, it gets phosphorylated through mTORC1-mediated phosphorylation to enhance YTHDF1 stability by removing 'Lys-11'-linked polyubiquitination. May also deubiquitinate other substrates such as the calcium channel CACNA1H. This is Ubiquitin carboxyl-terminal hydrolase 5 (Usp5) from Mus musculus (Mouse).